The sequence spans 116 residues: Large ribosomal subunit protein uL22c (116 aa).

The protein belongs to the universal ribosomal protein uL22 family. As to quaternary structure, part of the 50S ribosomal subunit.

The protein resides in the plastid. It is found in the chloroplast. Its function is as follows. This protein binds specifically to 23S rRNA. The globular domain of the protein is located near the polypeptide exit tunnel on the outside of the subunit, while an extended beta-hairpin is found that lines the wall of the exit tunnel in the center of the 70S ribosome. In Euglena gracilis, this protein is Large ribosomal subunit protein uL22c (rpl22).